A 634-amino-acid chain; its full sequence is UPF0329 protein ECU11_2090 (634 aa).

Basic and acidic residues-rich tracts occupy residues 354–365 (REEREKREESKG) and 397–407 (GESKEEDRGEE). A disordered region spans residues 354 to 438 (REEREKREES…KGSGEKRISE (85 aa)). A compositionally biased stretch (acidic residues) spans 408–417 (GGVEAEDPLE).

Belongs to the UPF0329 family.

The polypeptide is UPF0329 protein ECU11_2090 (Encephalitozoon cuniculi (strain GB-M1) (Microsporidian parasite)).